The primary structure comprises 485 residues: GTPase Obg (485 aa).

An Obg domain is found at 2-159 (PRFVDRVVIH…RELTLELKTV (158 aa)). An OBG-type G domain is found at 160–341 (ADVGLIGFPS…FIFALWDMVR (182 aa)). Residues 166–173 (GFPSAGKS), 191–195 (FTTLV), 212–215 (DVPG), 292–295 (NKID), and 322–324 (STV) contribute to the GTP site. Ser173 and Thr193 together coordinate Mg(2+). Positions 359-437 (PIAVDETGFS…IGDMTFDWEP (79 aa)) constitute an OCT domain. The segment at 439-485 (TPAGVDVQMSGRGTDTRLEQTDRVSAAERKIARRERRQSTDEPGGEE) is disordered. Basic and acidic residues predominate over residues 452–468 (TDTRLEQTDRVSAAERK).

The protein belongs to the TRAFAC class OBG-HflX-like GTPase superfamily. OBG GTPase family. Monomer. Mg(2+) is required as a cofactor.

It localises to the cytoplasm. Its function is as follows. An essential GTPase which binds GTP, GDP and possibly (p)ppGpp with moderate affinity, with high nucleotide exchange rates and a fairly low GTP hydrolysis rate. Plays a role in control of the cell cycle, stress response, ribosome biogenesis and in those bacteria that undergo differentiation, in morphogenesis control. The chain is GTPase Obg from Mycobacterium sp. (strain MCS).